The chain runs to 1196 residues: Jouberin (1196 aa).

Residues 13–45 are a coiled coil; that stretch reads KVRFEELLKTHSDLMREKKKLKKKLVRSEENIS. At serine 45 the chain carries Phosphoserine. 3 disordered regions span residues 56-186, 215-242, and 254-327; these read MKET…EEDE, QLTY…KEVP, and ISGD…HEIT. The span at 80 to 91 shows a compositional bias: polar residues; the sequence is DDVSAANTNNLK. Residues 92–101 are compositionally biased toward basic residues; that stretch reads KSTRVTKNKL. Positions 102–113 are enriched in polar residues; the sequence is RNTQLATENPNG. 3 stretches are compositionally biased toward basic and acidic residues: residues 141–154, 166–179, and 224–233; these read LKPE…DSTH, DHQK…GREE, and LFHDDKLSSE. The tract at residues 141–434 is interaction with HAP1; sequence LKPETPENKV…VFNENFPYLL (294 aa). Positions 300 to 309 are enriched in basic residues; the sequence is KPKKTKKKTK. WD repeat units lie at residues 607–649, 652–691, 695–735, 742–781, 797–837, 841–880, and 885–926; these read AGER…FMRE, GHLN…TNTF, PHPS…DSAI, VHKS…NDLE, EFKG…ARKF, ANYR…QVAM, and PFKS…AQQE. Serine 1002 carries the phosphoserine modification. The region spanning 1051-1111 is the SH3 domain; it reads DTAPTVVALY…PANHVASETL (61 aa). A disordered region spans residues 1115–1196; the sequence is LPPEIKERSP…QAGRKVTLIE (82 aa). Composition is skewed to basic and acidic residues over residues 1117 to 1136 and 1161 to 1182; these read PEIK…KIEK and THSE…DTRM. The residue at position 1123 (serine 1123) is a Phosphoserine.

In terms of assembly, self-associates. Part of the tectonic-like complex (also named B9 complex). Interacts with MKS1. Interacts with NPHP1; probably as heterodimers and/or AHI1(2):NPHP1(2) heterotetramers. Interacts (via SH3 domain) with the dynamin GTPase DNM2. Interacts with HAP1; probably as AHI1(2):HAP1(2) heterotetramers. Interacts with RAB8A. Interacts with CEND1. Interacts with CTNNB1/beta-catenin. Interacts with SPATA7. As to expression, highly expressed in the most primitive normal hematopoietic cells. Expressed in brain, particularly in neurons that give rise to the crossing axons of the corticospinal tract and superior cerebellar peduncles. Expressed in kidney (renal collecting duct cells) (at protein level).

Its subcellular location is the cytoplasm. The protein localises to the cytoskeleton. The protein resides in the cilium basal body. It localises to the cell junction. It is found in the adherens junction. Its subcellular location is the microtubule organizing center. The protein localises to the centrosome. The protein resides in the centriole. Its function is as follows. Involved in vesicle trafficking and required for ciliogenesis, formation of primary non-motile cilium, and recruitment of RAB8A to the basal body of primary cilium. Component of the tectonic-like complex, a complex localized at the transition zone of primary cilia and acting as a barrier that prevents diffusion of transmembrane proteins between the cilia and plasma membranes. Involved in neuronal differentiation. As a positive modulator of classical Wnt signaling, may play a crucial role in ciliary signaling during cerebellum embryonic development. The chain is Jouberin (AHI1) from Homo sapiens (Human).